Reading from the N-terminus, the 252-residue chain is Probable endonuclease 4 (252 aa).

Residues histidine 56, histidine 96, glutamate 129, aspartate 162, histidine 165, histidine 191, aspartate 204, histidine 206, and glutamate 233 each contribute to the Zn(2+) site.

It belongs to the AP endonuclease 2 family. Requires Zn(2+) as cofactor.

The catalysed reaction is Endonucleolytic cleavage to 5'-phosphooligonucleotide end-products.. Its function is as follows. Endonuclease IV plays a role in DNA repair. It cleaves phosphodiester bonds at apurinic or apyrimidinic (AP) sites, generating a 3'-hydroxyl group and a 5'-terminal sugar phosphate. This Mycobacterium leprae (strain Br4923) protein is Probable endonuclease 4.